A 404-amino-acid polypeptide reads, in one-letter code: Formate-dependent phosphoribosylglycinamide formyltransferase (404 aa).

N(1)-(5-phospho-beta-D-ribosyl)glycinamide contacts are provided by residues 25–26 and glutamate 85; that span reads EL. Residues arginine 118, lysine 159, 164–169, 199–202, and glutamate 207 contribute to the ATP site; these read SSGKGQ and EGFI. The 196-residue stretch at 123-318 folds into the ATP-grasp domain; the sequence is RLAAEELGLP…EFELHARAIL (196 aa). The Mg(2+) site is built by glutamate 277 and glutamate 289. N(1)-(5-phospho-beta-D-ribosyl)glycinamide-binding positions include aspartate 296, lysine 365, and 372–373; that span reads RR.

Belongs to the PurK/PurT family. As to quaternary structure, homodimer.

It catalyses the reaction N(1)-(5-phospho-beta-D-ribosyl)glycinamide + formate + ATP = N(2)-formyl-N(1)-(5-phospho-beta-D-ribosyl)glycinamide + ADP + phosphate + H(+). Its pathway is purine metabolism; IMP biosynthesis via de novo pathway; N(2)-formyl-N(1)-(5-phospho-D-ribosyl)glycinamide from N(1)-(5-phospho-D-ribosyl)glycinamide (formate route): step 1/1. Functionally, involved in the de novo purine biosynthesis. Catalyzes the transfer of formate to 5-phospho-ribosyl-glycinamide (GAR), producing 5-phospho-ribosyl-N-formylglycinamide (FGAR). Formate is provided by PurU via hydrolysis of 10-formyl-tetrahydrofolate. This chain is Formate-dependent phosphoribosylglycinamide formyltransferase, found in Burkholderia pseudomallei (strain 668).